Here is a 975-residue protein sequence, read N- to C-terminus: Glycine dehydrogenase (decarboxylating) (975 aa).

The residue at position 723 (Lys723) is an N6-(pyridoxal phosphate)lysine.

This sequence belongs to the GcvP family. The glycine cleavage system is composed of four proteins: P, T, L and H. The cofactor is pyridoxal 5'-phosphate.

It catalyses the reaction N(6)-[(R)-lipoyl]-L-lysyl-[glycine-cleavage complex H protein] + glycine + H(+) = N(6)-[(R)-S(8)-aminomethyldihydrolipoyl]-L-lysyl-[glycine-cleavage complex H protein] + CO2. In terms of biological role, the glycine cleavage system catalyzes the degradation of glycine. The P protein binds the alpha-amino group of glycine through its pyridoxal phosphate cofactor; CO(2) is released and the remaining methylamine moiety is then transferred to the lipoamide cofactor of the H protein. In Burkholderia vietnamiensis (strain G4 / LMG 22486) (Burkholderia cepacia (strain R1808)), this protein is Glycine dehydrogenase (decarboxylating).